A 90-amino-acid polypeptide reads, in one-letter code: Progonadoliberin-3 (90 aa).

The N-terminal stretch at 1–23 (MDVSSKVVVQVLLLALVVQVTLC) is a signal peptide. Gln24 bears the Pyrrolidone carboxylic acid mark. Gly33 is subject to Glycine amide.

This sequence belongs to the GnRH family. As to expression, expressed in neuron cell bodies of the nucleus olfactoretinalis.

The protein localises to the secreted. Functionally, stimulates the secretion of gonadotropins. This chain is Progonadoliberin-3 (gnrh3), found in Oryzias latipes (Japanese rice fish).